The sequence spans 606 residues: Mitogen-activated protein kinase 20 (606 aa).

A Protein kinase domain is found at 25–316; the sequence is FKVQEVIGKG…AEEALADPYF (292 aa). Residues 31–39 and lysine 54 each bind ATP; that span reads IGKGSYGVV. The Proton acceptor role is filled by aspartate 151. Threonine 187 carries the phosphothreonine modification. The short motif at 187 to 189 is the TXY element; that stretch reads TDY. Tyrosine 189 is modified (phosphotyrosine). Threonine 192 is modified (phosphothreonine).

Belongs to the protein kinase superfamily. CMGC Ser/Thr protein kinase family. MAP kinase subfamily. In terms of processing, dually phosphorylated on Thr-187 and Tyr-189, which activates the enzyme.

The enzyme catalyses L-seryl-[protein] + ATP = O-phospho-L-seryl-[protein] + ADP + H(+). The catalysed reaction is L-threonyl-[protein] + ATP = O-phospho-L-threonyl-[protein] + ADP + H(+). Its activity is regulated as follows. Activated by threonine and tyrosine phosphorylation. This Arabidopsis thaliana (Mouse-ear cress) protein is Mitogen-activated protein kinase 20 (MPK20).